Reading from the N-terminus, the 179-residue chain is Transcription termination/antitermination protein NusG (179 aa).

The KOW domain occupies 130-157 (EGDVVQIIDGAFMGQEGRVVEIENNKVK).

It belongs to the NusG family.

Functionally, participates in transcription elongation, termination and antitermination. This chain is Transcription termination/antitermination protein NusG, found in Streptococcus pyogenes serotype M1.